Consider the following 641-residue polypeptide: Lipase (641 aa).

Positions 1 to 38 (MKETKHQHTFSIRKSAYGAASVMVASCIFVIGGGVAEA) are cleaved as a signal peptide. Disordered stretches follow at residues 41–174 (STTQ…PSVD) and 206–246 (TVSP…KPTV). Positions 53–64 (QTSQQETHTHQT) are enriched in low complexity. A compositionally biased stretch (basic and acidic residues) spans 73-94 (TPEHVDDSKEATPLPEKAESPK). Polar residues-rich tracts occupy residues 95-106 (TEVTVQPSSHTQ) and 127-139 (PEST…VESN). The span at 140 to 165 (KATENEMSPVEHHASNVEKREDRLET) shows a compositional bias: basic and acidic residues. Polar residues predominate over residues 227-239 (ENTTAQNKFTSQA). Ser-369 acts as the Nucleophile in catalysis. Gly-535 contacts Ca(2+). Asp-559 serves as the catalytic Charge relay system. Asp-599 provides a ligand contact to Ca(2+). His-600 serves as the catalytic Charge relay system. Asp-602, Asp-607, and Asp-610 together coordinate Ca(2+).

The protein belongs to the AB hydrolase superfamily. Lipase family. Ca(2+) is required as a cofactor.

The protein localises to the secreted. The enzyme catalyses a triacylglycerol + H2O = a diacylglycerol + a fatty acid + H(+). The catalysed reaction is a 1,2-diacyl-sn-glycero-3-phosphocholine + H2O = a 2-acyl-sn-glycero-3-phosphocholine + a fatty acid + H(+). Has a broad substrate specificity hydrolyzing a variety of triglycerides and phosphatidylcholines. The sequence is that of Lipase (lip) from Staphylococcus hyicus.